Here is an 89-residue protein sequence, read N- to C-terminus: Cytochrome c6 (89 aa).

Residues Cys15, Cys18, His19, and Met61 each contribute to the heme c site.

Belongs to the cytochrome c family. PetJ subfamily. Monomer. Post-translationally, binds 1 heme c group covalently per subunit.

It localises to the plastid. Its subcellular location is the chloroplast thylakoid lumen. Its function is as follows. Functions as an electron carrier between membrane-bound cytochrome b6-f and photosystem I in oxygenic photosynthesis. This chain is Cytochrome c6 (petJ), found in Tetradesmus obliquus (Green alga).